A 290-amino-acid polypeptide reads, in one-letter code: ATP synthase gamma chain (290 aa).

The protein belongs to the ATPase gamma chain family. F-type ATPases have 2 components, CF(1) - the catalytic core - and CF(0) - the membrane proton channel. CF(1) has five subunits: alpha(3), beta(3), gamma(1), delta(1), epsilon(1). CF(0) has three main subunits: a, b and c.

The protein localises to the cell inner membrane. Produces ATP from ADP in the presence of a proton gradient across the membrane. The gamma chain is believed to be important in regulating ATPase activity and the flow of protons through the CF(0) complex. In Erythrobacter litoralis (strain HTCC2594), this protein is ATP synthase gamma chain.